The chain runs to 237 residues: UPF0280 protein Mpal_1292 (237 aa).

The protein belongs to the UPF0280 family.

This chain is UPF0280 protein Mpal_1292, found in Methanosphaerula palustris (strain ATCC BAA-1556 / DSM 19958 / E1-9c).